Consider the following 420-residue polypeptide: MAASQTFSLLAFTFSLLAFASTVSSHNITQILADSPDYSSFNSYLSQTKLADEINSRTTITVLVLNNGAMSALAGKHPLSVIKSALSLLVLLDYYDPQKLHKISKGTTLSTTLYQTTGNAPGNLGFVNITDLKGGKVGFGSAASGSKLDSSYTKSVKQIPYNISILEIDAPIIAPGVLTAPAPSASLSNITGLLEKAGCKTFANLLVSSGVLKTYESAVEKGLTVFAPSDEAFKAEGVPDLTKLTQAEVVSLLEYHALAEYKPKGSLKTNKNNISTLATNGAGKFDLTTSTSGDEVILHTGVAPSRLADTVLDATPVVIFTVDNVLLPAELFGKSKSPSPAPAPEPVTAPTPSPADAPSPTAASPPAPPTDESPESAPSDSPTGSANSKSANAAVGVSTPSLFTALVTIAAIAVSVSLCS.

The N-terminal stretch at 1–25 (MAASQTFSLLAFTFSLLAFASTVSS) is a signal peptide. FAS1 domains lie at 26–172 (HNIT…DAPI) and 186–326 (SLSN…DNVL). 5 N-linked (GlcNAc...) asparagine glycosylation sites follow: N27, N128, N162, N189, and N273. The tract at residues 335-394 (SKSPSPAPAPEPVTAPTPSPADAPSPTAASPPAPPTDESPESAPSDSPTGSANSKSANAA) is disordered. The span at 339–371 (SPAPAPEPVTAPTPSPADAPSPTAASPPAPPTD) shows a compositional bias: pro residues. A lipid anchor (GPI-anchor amidated asparagine) is attached at N392. Positions 393–420 (AAVGVSTPSLFTALVTIAAIAVSVSLCS) are cleaved as a propeptide — removed in mature form.

This sequence belongs to the fasciclin-like AGP family. In terms of tissue distribution, expressed mainly in flowers and to a lesser extent in leaves and roots.

The protein localises to the cell membrane. Its function is as follows. May be a cell surface adhesion protein. This Arabidopsis thaliana (Mouse-ear cress) protein is Fasciclin-like arabinogalactan protein 8 (FLA8).